Here is a 467-residue protein sequence, read N- to C-terminus: Cytochrome c-552 (467 aa).

The signal sequence occupies residues 1 to 27 (MVKKLTGKSFALSALVAASFVAAGAMA). His87 contributes to the heme c binding site. Cys115, Cys118, and Lys119 together coordinate heme. Residues Cys153, Cys156, His157, Cys195, Cys198, and His199 each coordinate heme c. Ca(2+)-binding residues include Glu201, Tyr202, Lys250, and Gln252. Substrate is bound at residue Tyr202. Residue His253 coordinates substrate. His264, Cys271, Cys274, His275, His290, Cys303, Cys306, His307, and His382 together coordinate heme c.

Belongs to the cytochrome c-552 family. The cofactor is Ca(2+). Requires heme c as cofactor.

The protein resides in the periplasm. The catalysed reaction is 6 Fe(III)-[cytochrome c] + NH4(+) + 2 H2O = 6 Fe(II)-[cytochrome c] + nitrite + 8 H(+). Its pathway is nitrogen metabolism; nitrate reduction (assimilation). Its function is as follows. Catalyzes the reduction of nitrite to ammonia, consuming six electrons in the process. The protein is Cytochrome c-552 of Shewanella amazonensis (strain ATCC BAA-1098 / SB2B).